The primary structure comprises 461 residues: uncharacterized protein (461 aa).

Positions 1-19 are enriched in basic and acidic residues; that stretch reads MEKCSHESGRHSAENDGKY. Positions 1-21 are disordered; the sequence is MEKCSHESGRHSAENDGKYDI.

This sequence belongs to the CapA family.

Could be involved in the biosynthesis of a cell wall component. This is an uncharacterized protein from Sinorhizobium fredii (strain NBRC 101917 / NGR234).